The chain runs to 228 residues: MNASDLIRIMQFGDSVLPVGAFTFSNGVESAIQTGVVRDVPTLKGFVLTALKQAASCDGMGVVAAHRAVVADDRDGIIRADWAVNNRKLNEESRLMATRMGKKLAEMSIHVVEHPLISWWLEQIKNGNTAGTYPVTQAVVMAAQGIGQREVVVMHQYGVAMTILSAAMRLMRVTHFDTQHILFELNHDIEKFCDIAEIGDIDQMSSYVPIVDVLAAVHVKAHVRLFSN.

This sequence belongs to the UreF family. UreD, UreF and UreG form a complex that acts as a GTP-hydrolysis-dependent molecular chaperone, activating the urease apoprotein by helping to assemble the nickel containing metallocenter of UreC. The UreE protein probably delivers the nickel.

It localises to the cytoplasm. In terms of biological role, required for maturation of urease via the functional incorporation of the urease nickel metallocenter. This Yersinia enterocolitica serotype O:8 / biotype 1B (strain NCTC 13174 / 8081) protein is Urease accessory protein UreF.